An 867-amino-acid polypeptide reads, in one-letter code: KH domain-containing protein akap-1 (867 aa).

A helical transmembrane segment spans residues 108–128 (HALLIALGGFSIAALFVWYIN). 2 disordered regions span residues 145-458 (SNGL…QKRV) and 481-523 (HENA…GLTT). Residues 152-162 (ATASDVQTENG) are compositionally biased toward polar residues. Basic and acidic residues-rich tracts occupy residues 186-211 (QQKD…DKKQ), 218-239 (TEKK…DHVA), 247-275 (SEHK…EIEV), and 298-307 (QFVKKEEPKL). Positions 336 to 345 (TKMNDATSPL) are enriched in polar residues. Basic and acidic residues predominate over residues 363-383 (EMEKSFNEEEFRLNESSDIDR). Residues 397 to 408 (NKNRSSQKRKGG) are compositionally biased toward basic residues. Basic and acidic residues-rich tracts occupy residues 441-458 (LTKE…QKRV) and 481-490 (HENASYEKSD). Residues 494 to 507 (LDSQNSEASSQDSG) are compositionally biased toward polar residues. Residues 528-595 (LPMYEFEIPN…DEINHCLQML (68 aa)) enclose the KH domain. The region spanning 689–747 (PCQNGLLCAAPVGNAWFRAVTVQYFDETDEVFVKFVDYGGYSKMARQDLRQIRTDLMSL) is the Tudor domain.

It is found in the membrane. The chain is KH domain-containing protein akap-1 from Caenorhabditis elegans.